Reading from the N-terminus, the 1180-residue chain is Pyruvate carboxylase 2 (1180 aa).

Serine 2 is modified (N-acetylserine). One can recognise a Biotin carboxylation domain in the interval 19–471; the sequence is EKNKILVANR…WTTFIDDTPQ (453 aa). Lysine 137, glutamate 221, and histidine 256 together coordinate ATP. The 198-residue stretch at 141–338 folds into the ATP-grasp domain; it reads RHLAARANVP…IVSAQIQIAA (198 aa). The active site involves arginine 313. The 268-residue stretch at 558-825 folds into the Pyruvate carboxyltransferase domain; that stretch reads TLLMDTTWRD…DTGINVEHVR (268 aa). Residues 566 to 570 and arginine 639 contribute to the substrate site; that span reads RDAHQ. Aspartate 567 contacts a divalent metal cation. A divalent metal cation contacts are provided by lysine 735, histidine 765, and histidine 767. Lysine 735 is subject to N6-carboxylysine. Residue threonine 899 coordinates substrate. The 76-residue stretch at 1095–1170 folds into the Biotinyl-binding domain; it reads KADVHDTHQI…DASDLLVVLE (76 aa). At lysine 1136 the chain carries N6-biotinyllysine.

Homotetramer. The cofactor is biotin. Zn(2+) is required as a cofactor.

It localises to the cytoplasm. It catalyses the reaction hydrogencarbonate + pyruvate + ATP = oxaloacetate + ADP + phosphate + H(+). The protein operates within carbohydrate biosynthesis; gluconeogenesis. Functionally, pyruvate carboxylase catalyzes a 2-step reaction, involving the ATP-dependent carboxylation of the covalently attached biotin in the first step and the transfer of the carboxyl group to pyruvate in the second. This Saccharomyces cerevisiae (strain ATCC 204508 / S288c) (Baker's yeast) protein is Pyruvate carboxylase 2 (PYC2).